Reading from the N-terminus, the 71-residue chain is Translation initiation factor IF-1 (71 aa).

Positions 1-71 constitute an S1-like domain; that stretch reads MSKDDLIQFT…LTKGRVIHRH (71 aa).

It belongs to the IF-1 family. As to quaternary structure, component of the 30S ribosomal translation pre-initiation complex which assembles on the 30S ribosome in the order IF-2 and IF-3, IF-1 and N-formylmethionyl-tRNA(fMet); mRNA recruitment can occur at any time during PIC assembly.

Its subcellular location is the cytoplasm. In terms of biological role, one of the essential components for the initiation of protein synthesis. Stabilizes the binding of IF-2 and IF-3 on the 30S subunit to which N-formylmethionyl-tRNA(fMet) subsequently binds. Helps modulate mRNA selection, yielding the 30S pre-initiation complex (PIC). Upon addition of the 50S ribosomal subunit IF-1, IF-2 and IF-3 are released leaving the mature 70S translation initiation complex. The chain is Translation initiation factor IF-1 from Rickettsia felis (strain ATCC VR-1525 / URRWXCal2) (Rickettsia azadi).